Reading from the N-terminus, the 281-residue chain is Energy-coupling factor transporter ATP-binding protein EcfA2 (281 aa).

The ABC transporter domain occupies 3-242; that stretch reads IKVTGLTYVY…TETLEEIGLA (240 aa). Residue 40 to 47 participates in ATP binding; it reads GHTGSGKS.

The protein belongs to the ABC transporter superfamily. Energy-coupling factor EcfA family. In terms of assembly, forms a stable energy-coupling factor (ECF) transporter complex composed of 2 membrane-embedded substrate-binding proteins (S component), 2 ATP-binding proteins (A component) and 2 transmembrane proteins (T component).

It is found in the cell membrane. ATP-binding (A) component of a common energy-coupling factor (ECF) ABC-transporter complex. Unlike classic ABC transporters this ECF transporter provides the energy necessary to transport a number of different substrates. In Acetivibrio thermocellus (strain ATCC 27405 / DSM 1237 / JCM 9322 / NBRC 103400 / NCIMB 10682 / NRRL B-4536 / VPI 7372) (Clostridium thermocellum), this protein is Energy-coupling factor transporter ATP-binding protein EcfA2.